The chain runs to 278 residues: Neuronal membrane glycoprotein M6-a (278 aa).

N-acetylmethionine is present on Met-1. The Cytoplasmic portion of the chain corresponds to 1–22 (MEENMEEGQTQKGCFECCIKCL). The helical transmembrane segment at 23 to 43 (GGIPYASLIATILLYAGVALF) threads the bilayer. The Extracellular portion of the chain corresponds to 44 to 84 (CGCGHEALSGTVNILQTYFELARTAGDTLDVFTMIDIFKYV). The helical transmembrane segment at 85-105 (IYGIAAAFFVYGILLMVEGFF) threads the bilayer. Residues 106-127 (TTGAIKDLYGDFKITTCGRCVS) are Cytoplasmic-facing. A helical transmembrane segment spans residues 128 to 148 (AWFIMLTYLFMLAWLGVTAFT). Residues 149 to 213 (SLPVYMYFNV…STELNMTFHL (65 aa)) lie on the Extracellular side of the membrane. Asn-164 carries N-linked (GlcNAc...) asparagine glycosylation. The cysteines at positions 174 and 192 are disulfide-linked. N-linked (GlcNAc...) asparagine glycosylation is present at Asn-208. Residues 214–234 (FIVALAGAGAAVIAMVHYLMV) traverse the membrane as a helical segment. Over 235 to 278 (LSANWAYVKDACRMQKYEDIKSKEEQELHDIHSTRSKERLNAYT) the chain is Cytoplasmic. Ser-256 bears the Phosphoserine mark. Thr-278 is subject to Phosphothreonine.

Belongs to the myelin proteolipid protein family. In terms of assembly, interacts with OPRM1. Interacts with palmitoyltransferase ZDHHC17/HIP14; the interaction leads to palmitoylation of GPM6A. N-glycosylated. Post-translationally, palmitoylated by ZDHHC17/HIP14. Widely expressed in the CNS. Found especially in the granule cell layer of the cerebellum but not in the molecular layer or white matter. Expressed in the immature embryonic retina including the nerve fiber layer (NFL), inner plexiform layer (IPL), and outer plexiform layer (OPL). Weakly expressed in processes of Mueller glia cells.

Its subcellular location is the cell membrane. It localises to the cell projection. The protein localises to the axon. The protein resides in the growth cone. It is found in the dendritic spine. Its subcellular location is the filopodium. It localises to the neuron projection. Functionally, involved in neuronal differentiation, including differentiation and migration of neuronal stem cells. Plays a role in neuronal plasticity and is involved in neurite and filopodia outgrowth, filopodia motility and probably synapse formation. Gpm6a-induced filopodia formation involves mitogen-activated protein kinase (MAPK) and Src signaling pathways. Conflictingly, PubMed:22162747 reports that induced cellular protrusions are simple membrane-wrapped tubules without actin or tubulin-based cytoskeletons and with Gpm6a gliding along membrane edges indicative for a function in actin-independent membrane deformation. May be involved in neuronal NGF-dependent Ca(2+) influx. May be involved in regulation of endocytosis and intracellular trafficking of G-protein-coupled receptors (GPCRs); enhances internalization and recycling of mu-type opioid receptor. The polypeptide is Neuronal membrane glycoprotein M6-a (Gpm6a) (Mus musculus (Mouse)).